The chain runs to 358 residues: Gap junction alpha-5 protein (358 aa).

The Cytoplasmic portion of the chain corresponds to 1-19 (MGDWSFLGEFLEEVHKHST). A helical transmembrane segment spans residues 20–40 (VIGKVWLTVLFIFRMLVLGTA). Residues 41-76 (AESSWGDEQADFQCDTMQPGCGNVCYDQAFPISHIR) are Extracellular-facing. A helical membrane pass occupies residues 77–97 (YWVLQIIFVSTPSLVYMGHAM). At 98 to 164 (HTVRMQEKRK…CSILIRTTME (67 aa)) the chain is on the cytoplasmic side. Residues 165-185 (VAFIVGQYLLYGIFLDTLHVC) form a helical membrane-spanning segment. The Extracellular portion of the chain corresponds to 186–205 (RRSPCPHPVNCYVSRPTEKN). Residues 206–226 (VFIVFMLAVAALSLFLSLAEL) form a helical membrane-spanning segment. The Cytoplasmic segment spans residues 227 to 358 (YHLGWKKLRQ…SKARSDDLSV (132 aa)). The tract at residues 318-358 (AQKPEVPNGASPGHRLPHGYQSDKRRLSKASSKARSDDLSV) is disordered. Residues Ser353 and Ser357 each carry the phosphoserine modification.

The protein belongs to the connexin family. Alpha-type (group II) subfamily. As to quaternary structure, a connexon is composed of a hexamer of connexins.

The protein localises to the cell membrane. It localises to the cell junction. Its subcellular location is the gap junction. Its function is as follows. One gap junction consists of a cluster of closely packed pairs of transmembrane channels, the connexons, through which materials of low MW diffuse from one cell to a neighboring cell. This is Gap junction alpha-5 protein (GJA5) from Canis lupus familiaris (Dog).